The sequence spans 148 residues: RING finger protein 24 (148 aa).

Residues 24–44 (IYIVVFGTAIFVFILSLLFCC) form a helical membrane-spanning segment. Residues 78-119 (CAVCLEDFKPRDELGICPCKHAFHRKCLIKWLEVRKVCPLCN) form an RING-type zinc finger.

As to quaternary structure, interacts with TRPC1, TRPC3, TRPC4, TRPC5, TRPC6 and TRPC7.

Its subcellular location is the golgi apparatus membrane. In terms of biological role, may play a role in TRPCs intracellular trafficking. The chain is RING finger protein 24 (RNF24) from Homo sapiens (Human).